Consider the following 324-residue polypeptide: MTSTGSTRYDGDSWDLASSVGVTATMVAAARAMATRAENPLINDPYAEPLVRAVGVDLLTRLATGEFNVADLDDDPQRPLGPLGDVADNMAVRTRFFDDFFLDATRAGLEQVVILASGLDARAYRLPWPPQTVVYEIDLPQVIEFKSRTLADLGAAPTADRRVVAVDLREDWPAALRAAGFDPNQPTAWSAEGLLGYLPPEAQDRLLDTVTELSAPGSRLAAECLSSVDPGEEEQIKERMQEVSARWRAHGFDVDMVGLVYFGDRNEAVPYLSDRGWLLTSTPLPELRAANGLAPAAVDDDGPSVDMLYVSGTLYTTPRPDPAP.

Residues D138 and 167-168 (DL) contribute to the S-adenosyl-L-methionine site.

This sequence belongs to the UPF0677 family.

Functionally, exhibits S-adenosyl-L-methionine-dependent methyltransferase activity. The protein is Putative S-adenosyl-L-methionine-dependent methyltransferase MMAR_1059 of Mycobacterium marinum (strain ATCC BAA-535 / M).